Here is a 223-residue protein sequence, read N- to C-terminus: MKITFLGHAVFLIETNKKILIDPFITGNPAFPKDFSFDKIDYILVTHGHGDHIGDTVELSKKYNATVVSNFEICNYLQKKGVNKVHPMHIGGSFNFDFGKLKMTPALHGSGIIEGDNIIYGGNPGGFVIYSEKSVYHAGDTGLTKDMELLRGVDVAILPIGGNFVMDVEDALKAVEMIKPKVVIPMHYNTWDIISADEEKFKKGSKQLGVKCIILKPGESVEI.

The protein belongs to the UPF0173 family.

This is UPF0173 metal-dependent hydrolase THA_544 from Thermosipho africanus (strain TCF52B).